The primary structure comprises 912 residues: Ubiquitin carboxyl-terminal hydrolase 3 (912 aa).

Basic and acidic residues predominate over residues 1–11; the sequence is MNMQDANKEES. 4 disordered regions span residues 1 to 30, 68 to 176, 241 to 384, and 396 to 417; these read MNMQ…TNMQ, IYHQ…SYSS, NSSV…TTAG, and GKSS…YVPP. Low complexity-rich tracts occupy residues 82–95, 102–140, and 159–176; these read NNIN…NNNI, SNGI…SNNH, and TNSS…SYSS. Positions 249–259 are enriched in basic residues; sequence AHHHTKSHSIP. A compositionally biased stretch (basic and acidic residues) spans 260–310; sequence KHNEEVKTETHGEEEDAHDKKPHASKDAHELKKKTEVKKEDAKQDRNEKVI. The span at 335–355 shows a compositional bias: low complexity; sequence SKTSSPSPSPPAAKSWSAIAS. 2 stretches are compositionally biased toward polar residues: residues 361–384 and 396–406; these read RQAS…TTAG and GKSSSPLLSKQ. A USP domain is found at 460-911; that stretch reads RGIINRANIC…TAYILMYQKR (452 aa). Cys469 functions as the Nucleophile in the catalytic mechanism. The active-site Proton acceptor is His861.

Belongs to the peptidase C19 family. In terms of assembly, heterotetramer with BRE5; contains two molecules of BRE5 and two molecules of UBP3. Forms a complex composed of CDC48, DOA1, deubiquitinase UBP3 and probably BRE5. Within the complex interacts directly with DOA1 and CDC48 in a BRE5-independent manner.

The enzyme catalyses Thiol-dependent hydrolysis of ester, thioester, amide, peptide and isopeptide bonds formed by the C-terminal Gly of ubiquitin (a 76-residue protein attached to proteins as an intracellular targeting signal).. In terms of biological role, has an ATP-independent isopeptidase activity, cleaving at the C-terminus of the ubiquitin moiety in natural or engineered linear fusion proteins, irrespective of their size or the presence of an N-terminal extension to ubiquitin. Plays a role in regulation of silencing by interacting with SIR4. Also, in conjunction with BRE5, cleaves ubiquitin, leading to the subsequent mono-ubiquitination of SEC23. Required for ribophagy, a process which relocalizes ribosomal particles into the vacuole for degradation in response to starvation. This chain is Ubiquitin carboxyl-terminal hydrolase 3 (UBP3), found in Saccharomyces cerevisiae (strain ATCC 204508 / S288c) (Baker's yeast).